We begin with the raw amino-acid sequence, 464 residues long: Cysteine--tRNA ligase (464 aa).

Residue cysteine 29 coordinates Zn(2+). Residues 31 to 41 (ATVQGVPHIGH) carry the 'HIGH' region motif. Positions 160–180 (RLDEVQQGESTASGKRDPRDF) are disordered. Cysteine 208, histidine 233, and glutamate 237 together coordinate Zn(2+). A 'KMSKS' region motif is present at residues 264 to 268 (KMSKS). An ATP-binding site is contributed by lysine 267.

This sequence belongs to the class-I aminoacyl-tRNA synthetase family. Monomer. Zn(2+) serves as cofactor.

The protein localises to the cytoplasm. The enzyme catalyses tRNA(Cys) + L-cysteine + ATP = L-cysteinyl-tRNA(Cys) + AMP + diphosphate. This Saccharopolyspora erythraea (strain ATCC 11635 / DSM 40517 / JCM 4748 / NBRC 13426 / NCIMB 8594 / NRRL 2338) protein is Cysteine--tRNA ligase.